We begin with the raw amino-acid sequence, 462 residues long: ATP synthase subunit beta 1 (462 aa).

Position 152 to 159 (152 to 159 (GGAGVGKT)) interacts with ATP.

The protein belongs to the ATPase alpha/beta chains family. F-type ATPases have 2 components, CF(1) - the catalytic core - and CF(0) - the membrane proton channel. CF(1) has five subunits: alpha(3), beta(3), gamma(1), delta(1), epsilon(1). CF(0) has four main subunits: a(1), b(1), b'(1) and c(9-12).

It localises to the cell inner membrane. It carries out the reaction ATP + H2O + 4 H(+)(in) = ADP + phosphate + 5 H(+)(out). Functionally, produces ATP from ADP in the presence of a proton gradient across the membrane. The catalytic sites are hosted primarily by the beta subunits. This is ATP synthase subunit beta 1 from Dinoroseobacter shibae (strain DSM 16493 / NCIMB 14021 / DFL 12).